The following is a 274-amino-acid chain: Secreted RxLR effector protein 40 (274 aa).

An N-terminal signal peptide occupies residues 1-21 (MRLYTQVVAASLVATLAIVDS). A RxLR-dEER motif is present at residues 35 to 53 (RFLRQDNATVARVSEDGER). N-linked (GlcNAc...) asparagine glycans are attached at residues N41, N74, and N258.

It belongs to the RxLR effector family.

The protein localises to the secreted. Its subcellular location is the host nucleus. It localises to the host cytoplasm. Its function is as follows. Secreted effector that completely suppresses the host cell death induced by cell death-inducing proteins. This chain is Secreted RxLR effector protein 40, found in Plasmopara viticola (Downy mildew of grapevine).